Consider the following 199-residue polypeptide: 7-methyl-GTP pyrophosphatase (199 aa).

The active-site Proton acceptor is the aspartate 76.

Belongs to the Maf family. YceF subfamily. It depends on a divalent metal cation as a cofactor.

It localises to the cytoplasm. It catalyses the reaction N(7)-methyl-GTP + H2O = N(7)-methyl-GMP + diphosphate + H(+). In terms of biological role, nucleoside triphosphate pyrophosphatase that hydrolyzes 7-methyl-GTP (m(7)GTP). May have a dual role in cell division arrest and in preventing the incorporation of modified nucleotides into cellular nucleic acids. In Hahella chejuensis (strain KCTC 2396), this protein is 7-methyl-GTP pyrophosphatase.